A 153-amino-acid chain; its full sequence is Large ribosomal subunit protein uL15 (153 aa).

The tract at residues 1-47 is disordered; it reads MRLHELSPAPGSRKDRKRVGRGDAGRGNYSGRGMKGQKARSGGATRP.

It belongs to the universal ribosomal protein uL15 family. In terms of assembly, part of the 50S ribosomal subunit.

Its function is as follows. Binds to the 23S rRNA. This chain is Large ribosomal subunit protein uL15, found in Dehalococcoides mccartyi (strain ATCC BAA-2100 / JCM 16839 / KCTC 5957 / BAV1).